The sequence spans 1286 residues: MDKLNKKNKNKRIRGLQISIASAEEMRSWSHGEVKKPETINYKSLKPETDGLFDEAIFGPVKDFECACGKYKKIKHRGRTCEKCGVEITESIVRRERMGHIDLAVPVAHIWMTKELPSPSKISLVLDVSYKEVEEVVYFVNYIILNPGNSKNPVFKFKEVVDLSGKGSKSARIKLRKVLREIKDKHQADKHSIIYKRASDYYNKLKESHLPFSIDEVAKFIETHTGIRLGIGAEAILELLEGVDLQKEYDLINEELNSYSKDLKANKEDQKVKRALRRLETIKWLKESGIKASNMILKVIPVTPPDTRPIIQLDGARFTTSDINNFYRRIIIRNERLKKIIELRAPSVILNNEKRMLQEVVDALFDNASRKKPITAKDKRPLKSLTDRLKGKQGLFRQNLLGKRVDYSGRSVIVIGPELKMYEVGIPAPMILKLFKPFIIRELIMRFNEDGQEIKPIAPNIKIAEQMIAQKSERIWDIVDKVIKERPVLLNRAPTLHRLGIQAFEPKIVDGKAIRLHPLVTTAFNADFDGDQMAVHVPISKEAVAEARAIMLASWHILGPKDGKPVATPTQDMVLGNYYLTTEKRNEKGEGLIFSDFDQVILAYEAKQVSIHALIGLSTKCLTKKPFAKQGIVITTVGKAIMNSIMPEEMAYLNDGDNLLELDESNIVFAGEDFKQKLAKRPLYKPFGKKTLSKIIEILYKNFPLQKVPQVLDKIKEFGFKYSTLSSTTISVFDIPRYDNKQEYITKANEMIAKLKHMYQKGLLTDDERYTKVIRLWADVKDNVSRDIKEIITRPEYKENSIVVIADSGARGNISNFTQLFGMRGLMSKSYNYDQKIKSQVIRDTIEVPIKHSFIEGLTINEYFNSSYGARKGMTDIAMKTSKSGYMTRKLVDAAQEVIINDSDCNTNKGIVVSTITNSLDGGVVETLSERIVTRYTIDPIYDEKTKELLVDADTLITSELAEKIAKANVTKALIRSPIYCQSTKGLCQKCFGNDLTTNDLVQIGTAIGVIAAQSIGEPGTQLTMRTFHTGGTANEGNITQGFERLKQIFDVVSPKEWELATIAENEGVVESITSDATARIIRIKTRLEAEEYRVPFDAVISVNPKDVVYPGSKLTEGSIDIKHLLRVAGIETVRQYFLEEVQKVYRLQGIEIADKYVEVTIRQLTNKLQVIDVGDSDYFVGQTVDINKFRKEVTNMLIANKRPPVAINQVFGLDEAPAKTGSFLSAASFQDTKKILTDAAVKNQIDYLVGLKENVILGNLIPAGTGFMSSEEIIKAGEEALEKEY.

Residues C66, C68, C81, and C84 each coordinate Zn(2+). Residues D527, D529, and D531 each coordinate Mg(2+). Zn(2+)-binding residues include C905, C981, C988, and C991.

The protein belongs to the RNA polymerase beta' chain family. As to quaternary structure, the RNAP catalytic core consists of 2 alpha, 1 beta, 1 beta' and 1 omega subunit. When a sigma factor is associated with the core the holoenzyme is formed, which can initiate transcription. The cofactor is Mg(2+). Zn(2+) is required as a cofactor.

The catalysed reaction is RNA(n) + a ribonucleoside 5'-triphosphate = RNA(n+1) + diphosphate. Functionally, DNA-dependent RNA polymerase catalyzes the transcription of DNA into RNA using the four ribonucleoside triphosphates as substrates. This chain is DNA-directed RNA polymerase subunit beta', found in Mycoplasmoides gallisepticum (strain R(low / passage 15 / clone 2)) (Mycoplasma gallisepticum).